Reading from the N-terminus, the 56-residue chain is Mitoregulin (56 aa).

The Mitochondrial matrix segment spans residues 2 to 9; sequence ADVSERTL. The helical transmembrane segment at 10 to 27 threads the bilayer; the sequence is QVSVLVAFASGVVLGWQA. At 28 to 56 the chain is on the mitochondrial intermembrane side; sequence NRLRRRYLDWRKRRLQDKLATTQKKLDLA.

This sequence belongs to the mitoregulin family. As to quaternary structure, interacts with mitochondrial trifunctional enzyme, a heterotetrameric complex composed of 2 HADHA subunits and 2 HADHB subunits. Interacts with cytochrome b5 reductase CYB5R3; the interaction is required to maintain cellular lipid composition and leads to stimulation of mitochondrial respiratory complex I activity. Interacts with ATP synthase subunit ATP5F1B/ATP5B. Enriched in heart and skeletal muscle (at protein level). Also enriched in adipose tissue with lower levels detected in liver, pancreas and brain (at protein level). Higher levels in differentiated myotubes than in satellite cells.

It is found in the mitochondrion inner membrane. Functionally, positively regulates mitochondrial complex assembly and/or stability. Increases mitochondrial membrane potential while decreasing mitochondrial reactive oxygen species. Increases mitochondrial respiration rate. Increased mitochondrial respiratory activity promotes myogenic differentiation which facilitates muscle growth and regeneration. Increases mitochondrial calcium retention capacity. Plays a role in maintenance of cellular lipid composition through its interaction with cytochrome b5 reductase CYB5R3 which is required for mitochondrial respiratory complex I activity. Interacts with the mitochondrial trifunctional enzyme complex (MTE) and enhances fatty acid beta-oxidation. Not required for MTE formation or stability. Modulates triglyceride clearance in adipocytes through its role in regulating fatty acid beta-oxidation and lipolysis. The sequence is that of Mitoregulin from Mus musculus (Mouse).